A 444-amino-acid polypeptide reads, in one-letter code: Acyl-CoA 6-desaturase (444 aa).

A disordered region spans residues Met-1–Phe-21. At Met-1–His-130 the chain is on the cytoplasmic side. The Cytochrome b5 heme-binding domain maps to Met-18 to Ala-95. A helical transmembrane segment spans residues Leu-131–Leu-151. Residue Ser-152 is a topological domain, lumenal. Residues Tyr-153–Ala-173 form a helical membrane-spanning segment. Residues Gln-174–Glu-264 lie on the Cytoplasmic side of the membrane. Residues His-180–His-184 carry the Histidine box-1 motif. The Histidine box-2 signature appears at His-217–His-221. A helical transmembrane segment spans residues Tyr-265–Met-285. At Thr-286–Arg-305 the chain is on the lumenal side. A helical membrane pass occupies residues Phe-306–Ile-326. Topologically, residues Arg-327–Lys-444 are cytoplasmic. The Histidine box-3 motif lies at Gln-382–His-386.

The protein belongs to the fatty acid desaturase type 1 family. As to expression, highly expressed in the adrenal gland, liver, brain, and testis, tissues where lipogenesis and steroidogenesis are active. Also detected in lung, heart, and skeletal muscle.

Its subcellular location is the endoplasmic reticulum membrane. The enzyme catalyses (9Z,12Z)-octadecadienoyl-CoA + 2 Fe(II)-[cytochrome b5] + O2 + 2 H(+) = (6Z,9Z,12Z)-octadecatrienoyl-CoA + 2 Fe(III)-[cytochrome b5] + 2 H2O. It catalyses the reaction (9Z,12Z,15Z)-octadecatrienoyl-CoA + 2 Fe(II)-[cytochrome b5] + O2 + 2 H(+) = (6Z,9Z,12Z,15Z)-octadecatetraenoyl-CoA + 2 Fe(III)-[cytochrome b5] + 2 H2O. The catalysed reaction is (9Z,12Z,15Z,18Z,21Z)-tetracosapentaenoyl-CoA + 2 Fe(II)-[cytochrome b5] + O2 + 2 H(+) = (6Z,9Z,12Z,15Z,18Z,21Z)-tetracosahexaenoyl-CoA + 2 Fe(III)-[cytochrome b5] + 2 H2O. It carries out the reaction (11E)-octadecenoyl-CoA + 2 Fe(II)-[cytochrome b5] + O2 + 2 H(+) = (6Z,11E)-octadecadienoyl-CoA + 2 Fe(III)-[cytochrome b5] + 2 H2O. The enzyme catalyses (11Z,14Z)-eicosadienoyl-CoA + 2 Fe(II)-[cytochrome b5] + O2 + 2 H(+) = (8Z,11Z,14Z)-eicosatrienoyl-CoA + 2 Fe(III)-[cytochrome b5] + 2 H2O. It catalyses the reaction (11Z,14Z,17Z)-eicosatrienoyl-CoA + 2 Fe(II)-[cytochrome b5] + O2 + 2 H(+) = (8Z,11Z,14Z,17Z)-eicosatetraenoyl-CoA + 2 Fe(III)-[cytochrome b5] + 2 H2O. The protein operates within lipid metabolism; polyunsaturated fatty acid biosynthesis. Involved in the biosynthesis of highly unsaturated fatty acids (HUFA) from the essential polyunsaturated fatty acids (PUFA) linoleic acid (LA) (18:2n-6) and alpha-linolenic acid (ALA) (18:3n-3) precursors, acting as a fatty acyl-coenzyme A (CoA) desaturase that introduces a cis double bond at carbon 6 of the fatty acyl chain. Catalyzes the first and rate limiting step in this pathway which is the desaturation of LA (18:2n-6) and ALA (18:3n-3) into gamma-linoleate (GLA) (18:3n-6) and stearidonate (18:4n-3), respectively. Subsequently, in the biosynthetic pathway of HUFA n-3 series, it desaturates tetracosapentaenoate (24:5n-3) to tetracosahexaenoate (24:6n-3), which is then converted to docosahexaenoate (DHA)(22:6n-3), an important lipid for nervous system function. It can also desaturate (11E)-octadecenoate (trans-vaccenoate) at carbon 6 generating (6Z,11E)-octadecadienoate. In addition to Delta-6 activity, this enzyme exhibits Delta-8 activity with slight biases toward n-3 fatty acyl-CoA substrates. This Mus musculus (Mouse) protein is Acyl-CoA 6-desaturase.